Reading from the N-terminus, the 879-residue chain is Protein translocase subunit SecA (879 aa).

Residues glutamine 86, 104–108, and aspartate 500 each bind ATP; that span reads GEGKT. The Zn(2+) site is built by cysteine 863, cysteine 865, cysteine 874, and histidine 875.

Belongs to the SecA family. Monomer and homodimer. Part of the essential Sec protein translocation apparatus which comprises SecA, SecYEG and auxiliary proteins SecDF-YajC and YidC. Zn(2+) serves as cofactor.

Its subcellular location is the cell inner membrane. It localises to the cytoplasm. It catalyses the reaction ATP + H2O + cellular proteinSide 1 = ADP + phosphate + cellular proteinSide 2.. In terms of biological role, part of the Sec protein translocase complex. Interacts with the SecYEG preprotein conducting channel. Has a central role in coupling the hydrolysis of ATP to the transfer of proteins into and across the cell membrane, serving both as a receptor for the preprotein-SecB complex and as an ATP-driven molecular motor driving the stepwise translocation of polypeptide chains across the membrane. The polypeptide is Protein translocase subunit SecA (Orientia tsutsugamushi (strain Ikeda) (Rickettsia tsutsugamushi)).